A 232-amino-acid polypeptide reads, in one-letter code: Large ribosomal subunit protein uL1 (232 aa).

Belongs to the universal ribosomal protein uL1 family. As to quaternary structure, part of the 50S ribosomal subunit.

In terms of biological role, binds directly to 23S rRNA. The L1 stalk is quite mobile in the ribosome, and is involved in E site tRNA release. Functionally, protein L1 is also a translational repressor protein, it controls the translation of the L11 operon by binding to its mRNA. The polypeptide is Large ribosomal subunit protein uL1 (Stenotrophomonas maltophilia (strain R551-3)).